The sequence spans 139 residues: Large ribosomal subunit protein bL17 (139 aa).

It belongs to the bacterial ribosomal protein bL17 family. As to quaternary structure, part of the 50S ribosomal subunit. Contacts protein L32.

This chain is Large ribosomal subunit protein bL17, found in Sphingopyxis alaskensis (strain DSM 13593 / LMG 18877 / RB2256) (Sphingomonas alaskensis).